The primary structure comprises 1162 residues: Transcription termination factor 2 (1162 aa).

The Zn(2+) site is built by Cys6, His9, Cys32, and Cys37. The GRF-type zinc finger occupies Cys6–Pro46. 4 disordered regions span residues Pro97 to His116, Ile142 to Asp358, Asp388 to Pro407, and Leu459 to Val503. Positions Ser105–His116 are enriched in polar residues. The span at Ile142 to Leu178 shows a compositional bias: basic and acidic residues. Lys143 is covalently cross-linked (Glycyl lysine isopeptide (Lys-Gly) (interchain with G-Cter in SUMO2)). Polar residues predominate over residues Ile219 to Pro232. Positions Ser233–Gln245 are enriched in low complexity. Basic and acidic residues predominate over residues Asp246–Val258. The segment covering Leu261–Lys274 has biased composition (polar residues). Over residues Pro323–Gly338 the composition is skewed to low complexity. The segment covering Leu459 to Gly485 has biased composition (polar residues). Ser460 is modified (phosphoserine). Residues Trp583–Ser786 form the Helicase ATP-binding domain. ATP is bound at residue Asp596–Thr603. A DEAH box motif is present at residues Asp737–His740. Residues Lys871–Arg890 form a disordered region. Residues Gly877–Phe888 show a composition bias toward polar residues. 2 positions are modified to phosphoserine: Ser883 and Ser908. Positions Ser995 to Arg1157 constitute a Helicase C-terminal domain.

This sequence belongs to the SNF2/RAD54 helicase family. As to quaternary structure, interacts with CDC5L. Part of the spliceosome.

It localises to the cytoplasm. Its subcellular location is the nucleus. DsDNA-dependent ATPase which acts as a transcription termination factor by coupling ATP hydrolysis with removal of RNA polymerase II from the DNA template. May contribute to mitotic transcription repression. May also be involved in pre-mRNA splicing. The chain is Transcription termination factor 2 (TTF2) from Homo sapiens (Human).